Reading from the N-terminus, the 643-residue chain is Mitochondrial Rho GTPase 2 (643 aa).

The Cytoplasmic portion of the chain corresponds to 1–611; the sequence is MMLGGKSSAG…SGRRSRNIRQ (611 aa). The Miro 1 domain maps to 12–179; that stretch reads RTSLRVAVAG…FYFASKAVLH (168 aa). 2 consecutive EF-hand domains span residues 195-230 and 315-350; these read RLRR…CFGA and EAMD…APDS. Positions 208, 210, 212, 219, 328, 330, 332, and 339 each coordinate Ca(2+). One can recognise a Miro 2 domain in the interval 423–592; the sequence is RNVFQCFVFG…FSRIVSTAEN (170 aa). A helical transmembrane segment spans residues 612–632; that stretch reads LVNSSLLFVSVGTAVGFAGLA. Residues 633 to 643 lie on the Mitochondrial intermembrane side of the membrane; the sequence is AYRAYSARKNA.

This sequence belongs to the mitochondrial Rho GTPase family. As to expression, expressed roots, rosette and cauline leaves, stems, flowers and siliques.

It localises to the mitochondrion outer membrane. Activated by calcium. Functionally, calcium-binding mitochondrial GTPase involved in calcium signaling during salt stress response. May play a role in the progression of embryonic cell division, development of haploid male and female gametes, and pollen tube growth. The protein is Mitochondrial Rho GTPase 2 of Arabidopsis thaliana (Mouse-ear cress).